Reading from the N-terminus, the 333-residue chain is Phosphate acyltransferase (333 aa).

The protein belongs to the PlsX family. In terms of assembly, homodimer. Probably interacts with PlsY.

The protein localises to the cytoplasm. The enzyme catalyses a fatty acyl-[ACP] + phosphate = an acyl phosphate + holo-[ACP]. It participates in lipid metabolism; phospholipid metabolism. Catalyzes the reversible formation of acyl-phosphate (acyl-PO(4)) from acyl-[acyl-carrier-protein] (acyl-ACP). This enzyme utilizes acyl-ACP as fatty acyl donor, but not acyl-CoA. The sequence is that of Phosphate acyltransferase from Lactobacillus johnsonii (strain CNCM I-12250 / La1 / NCC 533).